A 1562-amino-acid chain; its full sequence is Neuralized-like protein 4 (1562 aa).

Positions 1 to 42 (MAAGSGGSGGSGGGPGPGPGGGGGPSGSGSGPGSNGGLGSGG) are enriched in gly residues. 2 disordered regions span residues 1-48 (MAAG…HPRT) and 207-236 (PEPGFSPPTPIPTPPLEPLAPTEDSALAEQ). NHR domains lie at 41 to 207 (GGEL…VLPP) and 317 to 484 (ALLF…IVHN). A compositionally biased stretch (pro residues) spans 207-224 (PEPGFSPPTPIPTPPLEP). Phosphoserine is present on Ser502. 2 NHR domains span residues 520–686 (RLLF…IVDD) and 716–884 (DLRF…ITNA). A disordered region spans residues 691-716 (PVPEPLPEGNNQVSPSSPSSGAGGSD). Ser907 is modified (phosphoserine). The region spanning 913-1086 (AHRFHSTCGK…PVRGVSIVSS (174 aa)) is the NHR 5 domain. The interval 1086-1123 (STRLEESEGTQPPSPSSDTGSEGEEDDEGEEHGLGGQN) is disordered. The span at 1106-1115 (SEGEEDDEGE) shows a compositional bias: acidic residues. The NHR 6 domain occupies 1131–1294 (TLEFLENHGK…QCEQVTIVNP (164 aa)).

As to quaternary structure, interacts with CCP110; this interaction propmotes CCP110 ubiquitination and degradation via the proteasome pathway. Via its interaction with CCP110, may indirectly interact with CEP97. Interacts with the E3 ubiquitin-protein ligase HERC2 and UBE3A. May interact with MAPK6 and hence mediate MAPK6 interaction with UBE3A. Interaction with UBE3A may be indirect and mediated by HERC2. Post-translationally, ubiquitinated; undergoes HERC2-dependent 'Lys-48' ubiquitination. This ubiquitination leads to proteasomal degradation. In terms of tissue distribution, widely expressed at high levels (including brain).

The protein localises to the cytoplasm. It is found in the cytoskeleton. Its subcellular location is the microtubule organizing center. It localises to the centrosome. The protein resides in the centriole. Functionally, promotes CCP110 ubiquitination and proteasome-dependent degradation. By counteracting accumulation of CP110, maintains normal centriolar homeostasis and preventing formation of ectopic microtubular organizing centers. This is Neuralized-like protein 4 (NEURL4) from Homo sapiens (Human).